The primary structure comprises 102 residues: UPF0213 protein Spro_0507 (102 aa).

The region spanning 6–81 (PTWHLYMLRM…KQLSKTQKER (76 aa)) is the GIY-YIG domain.

Belongs to the UPF0213 family.

The protein is UPF0213 protein Spro_0507 of Serratia proteamaculans (strain 568).